The primary structure comprises 244 residues: Ribosomal RNA small subunit methyltransferase G (244 aa).

S-adenosyl-L-methionine is bound by residues Gly79, Phe84, 102–104 (DST), 130–131 (AE), and Arg149. Residues 225–244 (DRYPRREGVPNQQPLFWSAK) are disordered. The segment covering 234-244 (PNQQPLFWSAK) has biased composition (polar residues).

This sequence belongs to the methyltransferase superfamily. RNA methyltransferase RsmG family.

It localises to the cytoplasm. Functionally, specifically methylates the N7 position of a guanine in 16S rRNA. The protein is Ribosomal RNA small subunit methyltransferase G of Deinococcus deserti (strain DSM 17065 / CIP 109153 / LMG 22923 / VCD115).